A 110-amino-acid polypeptide reads, in one-letter code: Phosphoribosyl-ATP pyrophosphatase (110 aa).

It belongs to the PRA-PH family.

The protein localises to the cytoplasm. It carries out the reaction 1-(5-phospho-beta-D-ribosyl)-ATP + H2O = 1-(5-phospho-beta-D-ribosyl)-5'-AMP + diphosphate + H(+). It functions in the pathway amino-acid biosynthesis; L-histidine biosynthesis; L-histidine from 5-phospho-alpha-D-ribose 1-diphosphate: step 2/9. The protein is Phosphoribosyl-ATP pyrophosphatase of Hahella chejuensis (strain KCTC 2396).